Here is a 485-residue protein sequence, read N- to C-terminus: N-succinylglutamate 5-semialdehyde dehydrogenase (485 aa).

Position 220-225 (220-225) interacts with NAD(+); that stretch reads GSANTG. Residues glutamate 243 and cysteine 278 contribute to the active site.

It belongs to the aldehyde dehydrogenase family. AstD subfamily.

The catalysed reaction is N-succinyl-L-glutamate 5-semialdehyde + NAD(+) + H2O = N-succinyl-L-glutamate + NADH + 2 H(+). The protein operates within amino-acid degradation; L-arginine degradation via AST pathway; L-glutamate and succinate from L-arginine: step 4/5. In terms of biological role, catalyzes the NAD-dependent reduction of succinylglutamate semialdehyde into succinylglutamate. The chain is N-succinylglutamate 5-semialdehyde dehydrogenase from Aliivibrio salmonicida (strain LFI1238) (Vibrio salmonicida (strain LFI1238)).